The sequence spans 497 residues: Aspartyl/glutamyl-tRNA(Asn/Gln) amidotransferase subunit B (497 aa).

The protein belongs to the GatB/GatE family. GatB subfamily. In terms of assembly, heterotrimer of A, B and C subunits.

It carries out the reaction L-glutamyl-tRNA(Gln) + L-glutamine + ATP + H2O = L-glutaminyl-tRNA(Gln) + L-glutamate + ADP + phosphate + H(+). The enzyme catalyses L-aspartyl-tRNA(Asn) + L-glutamine + ATP + H2O = L-asparaginyl-tRNA(Asn) + L-glutamate + ADP + phosphate + 2 H(+). In terms of biological role, allows the formation of correctly charged Asn-tRNA(Asn) or Gln-tRNA(Gln) through the transamidation of misacylated Asp-tRNA(Asn) or Glu-tRNA(Gln) in organisms which lack either or both of asparaginyl-tRNA or glutaminyl-tRNA synthetases. The reaction takes place in the presence of glutamine and ATP through an activated phospho-Asp-tRNA(Asn) or phospho-Glu-tRNA(Gln). The protein is Aspartyl/glutamyl-tRNA(Asn/Gln) amidotransferase subunit B of Rhodopirellula baltica (strain DSM 10527 / NCIMB 13988 / SH1).